We begin with the raw amino-acid sequence, 208 residues long: Uridine kinase (208 aa).

ATP is bound at residue 12-19; that stretch reads GGSGGGKT.

This sequence belongs to the uridine kinase family.

It localises to the cytoplasm. The enzyme catalyses uridine + ATP = UMP + ADP + H(+). It carries out the reaction cytidine + ATP = CMP + ADP + H(+). It functions in the pathway pyrimidine metabolism; CTP biosynthesis via salvage pathway; CTP from cytidine: step 1/3. It participates in pyrimidine metabolism; UMP biosynthesis via salvage pathway; UMP from uridine: step 1/1. In Streptococcus pyogenes serotype M3 (strain ATCC BAA-595 / MGAS315), this protein is Uridine kinase.